The chain runs to 458 residues: MSSGRIVQIIGAVIDVEFPRDVVPSVYNALKVQGAETTLEVQQQLGDGVVRTIAMGSTEGLKRGLDVVDTGAAISVPVGKATLGRIMDVLGNPIDEAGPIGEEERRGIHQPAPSFADQAGGNDLLETGIKVIDLVCPFAKGGKVGLFGGAGVGKTVNMMELIRNIAMEHSGYSVFAGVGERTREGNDFYHEMKDSNVLDKVALVYGQMNEPPGNRLRVALTGLTMAEKFRDEGNDVLLFVDNIYRYTLAGTEVSALLGRMPSAVGYQPTLAEEMGVLQERITSTKEGSITSVQAVYVPADDLTDPSPATTFAHLDATVVLSRDIASLGIYPAVDPLDSTSRQLDPNVIGNEHYDTARGVQYVLQRYKELKDIIAILGMDELSEDDKQLVARARKIQRFLSQPFFVAEVFTGSPGKYVSLKDTIAGFSGILKGDYDHLPEQAFYMVGSIDEAIEKAKKL.

148–155 (GGAGVGKT) provides a ligand contact to ATP.

This sequence belongs to the ATPase alpha/beta chains family. As to quaternary structure, F-type ATPases have 2 components, CF(1) - the catalytic core - and CF(0) - the membrane proton channel. CF(1) has five subunits: alpha(3), beta(3), gamma(1), delta(1), epsilon(1). CF(0) has three main subunits: a(1), b(2) and c(9-12). The alpha and beta chains form an alternating ring which encloses part of the gamma chain. CF(1) is attached to CF(0) by a central stalk formed by the gamma and epsilon chains, while a peripheral stalk is formed by the delta and b chains.

It is found in the cell inner membrane. It carries out the reaction ATP + H2O + 4 H(+)(in) = ADP + phosphate + 5 H(+)(out). Functionally, produces ATP from ADP in the presence of a proton gradient across the membrane. The catalytic sites are hosted primarily by the beta subunits. The protein is ATP synthase subunit beta of Pseudomonas putida (strain GB-1).